The following is a 257-amino-acid chain: Coenzyme F420:L-glutamate ligase (257 aa).

Residues valine 9 to valine 12, serine 38 to threonine 39, and lysine 43 contribute to the GTP site. An a divalent metal cation-binding site is contributed by aspartate 113. Position 116 (asparagine 116) interacts with GTP. A divalent metal cation contacts are provided by aspartate 154, threonine 155, and glutamate 212. Threonine 210–threonine 217 is a GTP binding site.

Belongs to the CofE family. In terms of assembly, homodimer. The cofactor is Mg(2+). It depends on Mn(2+) as a cofactor. K(+) is required as a cofactor.

It carries out the reaction oxidized coenzyme F420-0 + GTP + L-glutamate = oxidized coenzyme F420-1 + GDP + phosphate + H(+). The enzyme catalyses oxidized coenzyme F420-1 + GTP + L-glutamate = oxidized coenzyme F420-2 + GDP + phosphate + H(+). The protein operates within cofactor biosynthesis; coenzyme F420 biosynthesis. Functionally, catalyzes the GTP-dependent successive addition of two or more gamma-linked L-glutamates to the L-lactyl phosphodiester of 7,8-didemethyl-8-hydroxy-5-deazariboflavin (F420-0) to form coenzyme F420-0-glutamyl-glutamate (F420-2) or polyglutamated F420 derivatives. The polypeptide is Coenzyme F420:L-glutamate ligase (Haloarcula marismortui (strain ATCC 43049 / DSM 3752 / JCM 8966 / VKM B-1809) (Halobacterium marismortui)).